The primary structure comprises 386 residues: Cytochrome b (386 aa).

4 helical membrane passes run 39–59, 83–104, 119–139, and 184–204; these read FGSL…FLAM, FMLK…YIHM, WNIG…GYVL, and FFSL…LHIL. The heme b site is built by H89 and H103. The heme b site is built by H188 and H202. Position 207 (H207) interacts with a ubiquinone. Transmembrane regions (helical) follow at residues 232-252, 294-314, 326-346, and 353-374; these read YKDL…CYFM, LGGV…PFIH, LGKI…WLGA, and YIMI…LVPL.

The protein belongs to the cytochrome b family. The main subunits of complex b-c1 are: cytochrome b, cytochrome c1 and the Rieske protein. The cofactor is heme b.

The protein localises to the mitochondrion inner membrane. Functionally, component of the ubiquinol-cytochrome c reductase complex (complex III or cytochrome b-c1 complex) that is part of the mitochondrial respiratory chain. The b-c1 complex mediates electron transfer from ubiquinol to cytochrome c. Contributes to the generation of a proton gradient across the mitochondrial membrane that is then used for ATP synthesis. In Sarcophyton glaucum (Toadstool umbrella leather coral), this protein is Cytochrome b (MT-CYB).